A 184-amino-acid polypeptide reads, in one-letter code: Large ribosomal subunit protein uL5 (184 aa).

This sequence belongs to the universal ribosomal protein uL5 family. In terms of assembly, part of the 50S ribosomal subunit; part of the 5S rRNA/L5/L18/L25 subcomplex. Contacts the 5S rRNA and the P site tRNA. Forms a bridge to the 30S subunit in the 70S ribosome.

In terms of biological role, this is one of the proteins that bind and probably mediate the attachment of the 5S RNA into the large ribosomal subunit, where it forms part of the central protuberance. In the 70S ribosome it contacts protein S13 of the 30S subunit (bridge B1b), connecting the 2 subunits; this bridge is implicated in subunit movement. Contacts the P site tRNA; the 5S rRNA and some of its associated proteins might help stabilize positioning of ribosome-bound tRNAs. This is Large ribosomal subunit protein uL5 from Thermotoga sp. (strain RQ2).